The following is an 86-amino-acid chain: Small ribosomal subunit protein bS20 (86 aa).

Belongs to the bacterial ribosomal protein bS20 family.

Binds directly to 16S ribosomal RNA. The protein is Small ribosomal subunit protein bS20 of Bifidobacterium adolescentis (strain ATCC 15703 / DSM 20083 / NCTC 11814 / E194a).